Here is a 326-residue protein sequence, read N- to C-terminus: AA10 family lytic polysaccharide monooxygenase C (326 aa).

An N-terminal signal peptide occupies residues 1–32; that stretch reads MVFSNSNASVSLFRLVALVATLSHLVFTFVDA. His-33 and His-118 together coordinate Cu(2+). Positions 33 to 200 constitute a Chitin-binding type-4 domain; it reads HGYVTFPASR…ANAFYQCLDL (168 aa). The cysteines at positions 81 and 197 are disulfide-linked. N-linked (GlcNAc...) asparagine glycans are attached at residues Asn-206, Asn-215, Asn-266, and Asn-303. A disordered region spans residues 206 to 326; it reads NSSSSSSSSN…KSQMRRDRQG (121 aa). The segment covering 207-281 has biased composition (low complexity); that stretch reads SSSSSSSSNS…NNGGSSGSTT (75 aa).

It belongs to the polysaccharide monooxygenase AA10 family. The cofactor is Cu(2+).

It is found in the secreted. Its function is as follows. Lytic polysaccharide monooxygenase (LPMO) that oxidatively cleaves alpha- and beta-chitin with C1 regioselectivity. Catalysis by LPMOs requires the reduction of the active-site copper from Cu(II) to Cu(I) by a reducing agent and H(2)O(2) or O(2) as a cosubstrate. Exhibits enzymatic activity on U.maydis fungal cell wall chitin and Boosts chitin hydrolysis by chitinase GH18A. This Mycosarcoma maydis (Corn smut fungus) protein is AA10 family lytic polysaccharide monooxygenase C.